A 124-amino-acid polypeptide reads, in one-letter code: UPF0102 protein HEAR0176 (124 aa).

The protein belongs to the UPF0102 family.

The chain is UPF0102 protein HEAR0176 from Herminiimonas arsenicoxydans.